A 485-amino-acid polypeptide reads, in one-letter code: Amidophosphoribosyltransferase, chloroplastic (485 aa).

A chloroplast-targeting transit peptide spans Lys-1–Glu-18. Cys-19 serves as the catalytic Nucleophile. Positions Cys-19–Thr-237 constitute a Glutamine amidotransferase type-2 domain. [4Fe-4S] cluster is bound at residue Cys-253. Ser-300, Asp-362, and Asp-363 together coordinate Mg(2+). 3 residues coordinate [4Fe-4S] cluster: Cys-399, Cys-450, and Cys-453.

In the C-terminal section; belongs to the purine/pyrimidine phosphoribosyltransferase family. Mg(2+) serves as cofactor. [4Fe-4S] cluster is required as a cofactor.

The protein resides in the plastid. It is found in the chloroplast. The enzyme catalyses 5-phospho-beta-D-ribosylamine + L-glutamate + diphosphate = 5-phospho-alpha-D-ribose 1-diphosphate + L-glutamine + H2O. It participates in purine metabolism; IMP biosynthesis via de novo pathway; N(1)-(5-phospho-D-ribosyl)glycinamide from 5-phospho-alpha-D-ribose 1-diphosphate: step 1/2. In Vigna aconitifolia (Moth bean), this protein is Amidophosphoribosyltransferase, chloroplastic (PUR1).